Reading from the N-terminus, the 477-residue chain is Aspartyl/glutamyl-tRNA(Asn/Gln) amidotransferase subunit B (477 aa).

It belongs to the GatB/GatE family. GatB subfamily. As to quaternary structure, heterotrimer of A, B and C subunits.

It carries out the reaction L-glutamyl-tRNA(Gln) + L-glutamine + ATP + H2O = L-glutaminyl-tRNA(Gln) + L-glutamate + ADP + phosphate + H(+). The enzyme catalyses L-aspartyl-tRNA(Asn) + L-glutamine + ATP + H2O = L-asparaginyl-tRNA(Asn) + L-glutamate + ADP + phosphate + 2 H(+). Its function is as follows. Allows the formation of correctly charged Asn-tRNA(Asn) or Gln-tRNA(Gln) through the transamidation of misacylated Asp-tRNA(Asn) or Glu-tRNA(Gln) in organisms which lack either or both of asparaginyl-tRNA or glutaminyl-tRNA synthetases. The reaction takes place in the presence of glutamine and ATP through an activated phospho-Asp-tRNA(Asn) or phospho-Glu-tRNA(Gln). The protein is Aspartyl/glutamyl-tRNA(Asn/Gln) amidotransferase subunit B of Legionella pneumophila (strain Paris).